The following is a 223-amino-acid chain: uncharacterized protein (223 aa).

This sequence to M.jannaschii MJ1453.

This is an uncharacterized protein from Methanothermobacter thermautotrophicus (strain ATCC 29096 / DSM 1053 / JCM 10044 / NBRC 100330 / Delta H) (Methanobacterium thermoautotrophicum).